Reading from the N-terminus, the 715-residue chain is Forkhead box protein P2 (715 aa).

Residues 1 to 28 are compositionally biased toward polar residues; that stretch reads MMQESATETISNSSMNQNGMSTLSSQLD. Disordered regions lie at residues 1–46 and 281–339; these read MMQE…EVST and DNGI…TGAS. Low complexity predominate over residues 292-305; it reads TTNNSSSTTSSNTS. Residues 326 to 337 show a composition bias toward basic and acidic residues; it reads ARRDSSSHEETG. The segment at 346–371 adopts a C2H2-type zinc-finger fold; that stretch reads GVCKWPGCESICEDFGQFLKHLNNEH. Residues 388–409 form a leucine-zipper region; sequence VQQLEIQLSKERERLQAMMTHL. Residues 422-426 are CTBP1-binding; that stretch reads PLNLV. Residues 438–459 show a composition bias toward low complexity; it reads TSPQSLPQTPTTPTAPVTPITQ. The segment at 438 to 465 is disordered; it reads TSPQSLPQTPTTPTAPVTPITQGPSVIT. A DNA-binding region (fork-head) is located at residues 504–594; it reads RPPFTYATLI…SQKITGSPTL (91 aa). Disordered stretches follow at residues 649–668 and 678–715; these read LDHIDSNGNSSPGCSPQPHI and VIAEDEDCPMSLVTTANHSPELEDDREIEEEPLSEDLE. The segment covering 699 to 715 has biased composition (acidic residues); that stretch reads LEDDREIEEEPLSEDLE.

As to quaternary structure, forms homodimers and heterodimers with FOXP1 and FOXP4. Dimerization is required for DNA-binding. Interacts with CTBP1. Interacts with FOXP1. Isoform 1 and isoform 3 interact with TBR1. Interacts with ZMYM2. As to expression, isoform 1 and isoform 6 are expressed in adult and fetal brain, caudate nucleus and lung.

The protein localises to the nucleus. Its function is as follows. Transcriptional repressor that may play a role in the specification and differentiation of lung epithelium. May also play a role in developing neural, gastrointestinal and cardiovascular tissues. Can act with CTBP1 to synergistically repress transcription but CTPBP1 is not essential. Plays a role in synapse formation by regulating SRPX2 levels. Involved in neural mechanisms mediating the development of speech and language. The sequence is that of Forkhead box protein P2 (FOXP2) from Homo sapiens (Human).